A 373-amino-acid polypeptide reads, in one-letter code: Queuine tRNA-ribosyltransferase (373 aa).

Residue Asp-90 is the Proton acceptor of the active site. Residues 90-94, Asp-144, Gln-193, and Gly-220 contribute to the substrate site; that span reads DSGGF. The tract at residues 251–257 is RNA binding; that stretch reads GVGTPED. Residue Asp-270 is the Nucleophile of the active site. The segment at 275-279 is RNA binding; important for wobble base 34 recognition; it reads TRNAR. Zn(2+) contacts are provided by Cys-308, Cys-310, Cys-313, and His-339.

This sequence belongs to the queuine tRNA-ribosyltransferase family. In terms of assembly, homodimer. Within each dimer, one monomer is responsible for RNA recognition and catalysis, while the other monomer binds to the replacement base PreQ1. Zn(2+) serves as cofactor.

It catalyses the reaction 7-aminomethyl-7-carbaguanine + guanosine(34) in tRNA = 7-aminomethyl-7-carbaguanosine(34) in tRNA + guanine. It participates in tRNA modification; tRNA-queuosine biosynthesis. Functionally, catalyzes the base-exchange of a guanine (G) residue with the queuine precursor 7-aminomethyl-7-deazaguanine (PreQ1) at position 34 (anticodon wobble position) in tRNAs with GU(N) anticodons (tRNA-Asp, -Asn, -His and -Tyr). Catalysis occurs through a double-displacement mechanism. The nucleophile active site attacks the C1' of nucleotide 34 to detach the guanine base from the RNA, forming a covalent enzyme-RNA intermediate. The proton acceptor active site deprotonates the incoming PreQ1, allowing a nucleophilic attack on the C1' of the ribose to form the product. After dissociation, two additional enzymatic reactions on the tRNA convert PreQ1 to queuine (Q), resulting in the hypermodified nucleoside queuosine (7-(((4,5-cis-dihydroxy-2-cyclopenten-1-yl)amino)methyl)-7-deazaguanosine). In Campylobacter jejuni subsp. jejuni serotype O:6 (strain 81116 / NCTC 11828), this protein is Queuine tRNA-ribosyltransferase.